A 394-amino-acid polypeptide reads, in one-letter code: Exodeoxyribonuclease 7 large subunit (394 aa).

This sequence belongs to the XseA family. In terms of assembly, heterooligomer composed of large and small subunits.

The protein resides in the cytoplasm. The catalysed reaction is Exonucleolytic cleavage in either 5'- to 3'- or 3'- to 5'-direction to yield nucleoside 5'-phosphates.. Its function is as follows. Bidirectionally degrades single-stranded DNA into large acid-insoluble oligonucleotides, which are then degraded further into small acid-soluble oligonucleotides. The protein is Exodeoxyribonuclease 7 large subunit of Thermotoga sp. (strain RQ2).